The following is a 415-amino-acid chain: MMAQLQFRDAFWCRDFTAHTGYEVLLQRLLDGRKMCKDVEELLRQRAQAEERYGKELVQIARKAGGQTEMNSLRTSFDSLKQQTENVGSAHIQLALALREELRSLEEFRERQKEQRKKYEAIMDRVQKSKLSLYKKTMESKKAYDQKCRDADDAEQAFERVSANGHQKQVEKSQNKAKQCKESATEAERVYRQNIEQLERARTEWEQEHRTTCEAFQLQEFDRLTILRNALWVHCNQLSMQCVKDDELYEEVRLTLEGCDVEGDINGFIQSKSTGREPPAPVPYQNYYDREVTPLIGSPSIQPSCGVIKRFSGLLHGSPKTTPSAPAASTETLTPTPERNELVYASIEVQATQGNLNSSAQDYRALYDYTAQNSDELDISAGDILAVILEGEDGWWTVERNGQRGFVPGSYLEKL.

An F-BAR domain is found at 5 to 264 (LQFRDAFWCR…TLEGCDVEGD (260 aa)). Coiled coils occupy residues 94–133 (LALALREELRSLEEFRERQKEQRKKYEAIMDRVQKSKLSL) and 162–215 (SANG…TCEA). Ser318 is subject to Phosphoserine. A Phosphotyrosine; by ABL1 modification is found at Tyr344. In terms of domain architecture, SH3 spans 358 to 415 (SSAQDYRALYDYTAQNSDELDISAGDILAVILEGEDGWWTVERNGQRGFVPGSYLEKL).

Homodimer. Homotrimer. Interacts (via coiled-coil domain) with CD2AP, PTPN12 and PTPN18. Interacts (via SH3 domain) with ABL1 and WAS. Interacts (via SH3 and coiled-coil domains) with MEFV (via B-box zinc finger); the interaction allows binding of MEFV to PYCARD and facilitates formation of PYCARD pyroptosomes. Interacts with DNM2 and FASLG. Interacts with CD2. Dephosphorylated on Tyr-344 by PTPN18, this event negatively regulates the association of PSTPIP1 with SH2 domain-containing proteins as tyrosine kinase. Phosphorylation of Tyr-344 is probably required for subsequent phosphorylation at other tyrosine residues. Phosphorylation is induced by activation of the EGFR and PDGFR in a ABL1 dependent manner. The phosphorylation regulates the interaction with WAS and with MEFV. Highly expressed in adult lung and spleen, and weakly expressed in testis, muscle, kidney, brain and heart. Highly expressed in spleen and thymus, moderately in lung, brain and muscle, and weakly expressed in heart and liver (at protein level).

Its subcellular location is the cytoplasm. It is found in the perinuclear region. The protein localises to the cell projection. The protein resides in the lamellipodium. It localises to the cleavage furrow. Its subcellular location is the cytoskeleton. It is found in the cell membrane. The protein localises to the uropodium. Functionally, involved in regulation of the actin cytoskeleton. May regulate WAS actin-bundling activity. Bridges the interaction between ABL1 and PTPN18 leading to ABL1 dephosphorylation. May play a role as a scaffold protein between PTPN12 and WAS and allow PTPN12 to dephosphorylate WAS. Has the potential to physically couple CD2 and CD2AP to WAS. Acts downstream of CD2 and CD2AP to recruit WAS to the T-cell:APC contact site so as to promote the actin polymerization required for synapse induction during T-cell activation. Down-regulates CD2-stimulated adhesion through the coupling of PTPN12 to CD2. Also has a role in innate immunity and the inflammatory response. Recruited to inflammasomes by MEFV. Induces formation of pyroptosomes, large supramolecular structures composed of oligomerized PYCARD dimers which form prior to inflammatory apoptosis. Binding to MEFV allows MEFV to bind to PYCARD and facilitates pyroptosome formation. Regulates endocytosis and cell migration in neutrophils. This Mus musculus (Mouse) protein is Proline-serine-threonine phosphatase-interacting protein 1 (Pstpip1).